The sequence spans 168 residues: 2-oxo-4-hydroxy-4-carboxy-5-ureidoimidazoline decarboxylase (168 aa).

The Proton donor; for OHCU decarboxylase activity role is filled by H70. Residues 70 to 79 (HPDLGERTEM) show a composition bias toward basic and acidic residues. The disordered stretch occupies residues 70 to 93 (HPDLGERTEMTDASEAEQASAELD). Substrate contacts are provided by residues P71, 83-87 (SEAEQ), and 118-122 (FVMAV).

This sequence belongs to the OHCU decarboxylase family.

It catalyses the reaction 5-hydroxy-2-oxo-4-ureido-2,5-dihydro-1H-imidazole-5-carboxylate + H(+) = (S)-allantoin + CO2. Its pathway is purine metabolism; urate degradation; (S)-allantoin from urate: step 3/3. Catalyzes the stereoselective decarboxylation of 2-oxo-4-hydroxy-4-carboxy-5-ureidoimidazoline (OHCU) to (S)-allantoin. The polypeptide is 2-oxo-4-hydroxy-4-carboxy-5-ureidoimidazoline decarboxylase (Haloferax volcanii (strain ATCC 29605 / DSM 3757 / JCM 8879 / NBRC 14742 / NCIMB 2012 / VKM B-1768 / DS2) (Halobacterium volcanii)).